A 197-amino-acid polypeptide reads, in one-letter code: Probable low-affinity putrescine importer PlaP (197 aa).

The next 5 helical transmembrane spans lie at 33–53 (GVLIFSSVTVLASGTAAHAGV), 85–105 (VLLVXAIALLAIKLDLVTATA), 107–127 (INLGALVAFTFVNLSVISQFW), 140–160 (FNYLILPVCGALTVGALWINL), and 163–183 (SSMVLGLIWGGIGLVYXACVT).

The protein belongs to the amino acid-polyamine-organocation (APC) superfamily.

It localises to the cell inner membrane. The enzyme catalyses putrescine(in) + H(+)(in) = putrescine(out) + H(+)(out). Functionally, putrescine importer. This Klebsiella pneumoniae protein is Probable low-affinity putrescine importer PlaP (plaP).